The sequence spans 384 residues: Formate-dependent phosphoribosylglycinamide formyltransferase (384 aa).

N(1)-(5-phospho-beta-D-ribosyl)glycinamide is bound by residues 14-15 and glutamate 74; that span reads EL. ATP is bound by residues arginine 106, lysine 147, 152-157, 187-190, and glutamate 195; these read SSGKGQ and EEFI. The 190-residue stretch at 111-300 folds into the ATP-grasp domain; that stretch reads RLAAETLGLA…EFALHVRAIL (190 aa). The Mg(2+) site is built by glutamate 259 and glutamate 271. N(1)-(5-phospho-beta-D-ribosyl)glycinamide contacts are provided by residues aspartate 278, lysine 348, and 355 to 356; that span reads RR.

The protein belongs to the PurK/PurT family. In terms of assembly, homodimer.

It catalyses the reaction N(1)-(5-phospho-beta-D-ribosyl)glycinamide + formate + ATP = N(2)-formyl-N(1)-(5-phospho-beta-D-ribosyl)glycinamide + ADP + phosphate + H(+). Its pathway is purine metabolism; IMP biosynthesis via de novo pathway; N(2)-formyl-N(1)-(5-phospho-D-ribosyl)glycinamide from N(1)-(5-phospho-D-ribosyl)glycinamide (formate route): step 1/1. Functionally, catalyzes two reactions: the first one is the production of beta-formyl glycinamide ribonucleotide (GAR) from formate, ATP and beta GAR; the second, a side reaction, is the production of acetyl phosphate and ADP from acetate and ATP. In terms of biological role, involved in the de novo purine biosynthesis. Catalyzes the transfer of formate to 5-phospho-ribosyl-glycinamide (GAR), producing 5-phospho-ribosyl-N-formylglycinamide (FGAR). Formate is provided by PurU via hydrolysis of 10-formyl-tetrahydrofolate. The polypeptide is Formate-dependent phosphoribosylglycinamide formyltransferase (Bacillus subtilis (strain 168)).